The primary structure comprises 2251 residues: U3 small nucleolar RNA-associated protein 10 (2251 aa).

The stretch at 945–983 is one HEAT repeat; that stretch reads VVPLLLTALADAEAAIRLAAIACLAHILAICKYAGDLAK. Transmembrane regions (helical) follow at residues 962–982 and 1460–1480; these read LAAI…GDLA and LLVD…LLVD.

Belongs to the HEATR1/UTP10 family. As to quaternary structure, component of the ribosomal small subunit (SSU) processome.

The protein resides in the nucleus. Its subcellular location is the nucleolus. The protein localises to the membrane. Functionally, involved in nucleolar processing of pre-18S ribosomal RNA. Involved in ribosome biosynthesis. The chain is U3 small nucleolar RNA-associated protein 10 from Mycosarcoma maydis (Corn smut fungus).